The chain runs to 481 residues: Protein FAM83E (481 aa).

The interval 1–296 is DUF1669; that stretch reads MAASQLAALE…LYAASRPLSA (296 aa). A disordered region spans residues 351–481; sequence KQETPTTTGP…ASGSGSGRRR (131 aa). Residues 371-385 are compositionally biased toward low complexity; that stretch reads RTRTTSGPPTRPSRS. Polar residues-rich tracts occupy residues 391-400 and 465-474; these read RLSQLSGSSD and NATTSDWASG.

This sequence belongs to the FAM83 family. In terms of assembly, directly interacts (via DUF1669) with CSNK1A1, CSNK1A1L, CSNK1D and CSNK1E. May interact with RAF1.

Its subcellular location is the cytoplasm. The protein resides in the perinuclear region. May play a role in MAPK signaling. The protein is Protein FAM83E of Mus musculus (Mouse).